Consider the following 118-residue polypeptide: Ribosome-binding factor A (118 aa).

This sequence belongs to the RbfA family. In terms of assembly, monomer. Binds 30S ribosomal subunits, but not 50S ribosomal subunits or 70S ribosomes.

Its subcellular location is the cytoplasm. Its function is as follows. One of several proteins that assist in the late maturation steps of the functional core of the 30S ribosomal subunit. Associates with free 30S ribosomal subunits (but not with 30S subunits that are part of 70S ribosomes or polysomes). Required for efficient processing of 16S rRNA. May interact with the 5'-terminal helix region of 16S rRNA. The polypeptide is Ribosome-binding factor A (Thermodesulfovibrio yellowstonii (strain ATCC 51303 / DSM 11347 / YP87)).